The chain runs to 348 residues: Cell surface glycoprotein CD200 receptor 1 (348 aa).

Residues 1-24 (MLCPWRTANLGLLLILTIFLVAEA) form the signal peptide. The Extracellular segment spans residues 29 to 265 (QPNNSLMLQT…PVPGAKKSAK (237 aa)). Asn-31, Asn-60, Asn-69, Asn-116, Asn-122, Asn-185, Asn-218, Asn-233, and Asn-247 each carry an N-linked (GlcNAc...) asparagine glycan. Disulfide bonds link Cys-83/Cys-155 and Cys-107/Cys-123. The Ig-like C2-type domain maps to 160 to 251 (PDGNFHRGYH…SHLTGNKSLY (92 aa)). 2 disulfides stabilise this stretch: Cys-190–Cys-239 and Cys-209–Cys-227. The chain crosses the membrane as a helical span at residues 266-286 (LYIPYIILTIIILTIVGFIWL). The Cytoplasmic portion of the chain corresponds to 287-348 (LKVNGCRKYK…SEVDTDLHTL (62 aa)).

Belongs to the CD200R family. CD200 and CD200R1 interact via their respective N-terminal Ig-like domains. Interacts with Human herpesvirus 8 vOX2 protein. In terms of assembly, (Microbial infection) Interacts with human herpesvirus 8/HHV-8 protein vOX2/K14. In terms of tissue distribution, expressed in granulocytes, monocytes, most T-cells, neutrophils, basophils and a subset of NK, NKT and B-cells (at protein level). Expressed in bone marrow, lymph nodes, spleen, lung, liver, spinal cord, kidney. Expressed in monocyte-derived dendritic and mast cells.

The protein resides in the cell membrane. It is found in the secreted. Its function is as follows. Inhibitory receptor for the CD200/OX2 cell surface glycoprotein. Limits inflammation by inhibiting the expression of pro-inflammatory molecules including TNF-alpha, interferons, and inducible nitric oxide synthase (iNOS) in response to selected stimuli. Also binds to HHV-8 K14 viral CD200 homolog with identical affinity and kinetics as the host CD200. The chain is Cell surface glycoprotein CD200 receptor 1 (CD200R1) from Homo sapiens (Human).